The sequence spans 977 residues: MPARRLLLLLTLLLPGLGIFGSTSTVTLPETLLFVSTLDGSLHAVSKRTGSIKWTLKEDPVLQVPTHVEEPAFLPDPNDGSLYTLGSKNNEGLTKLPFTIPELVQASPCRSSDGILYMGKKQDIWYVIDLLTGEKQQTLSSAFADSLCPSTSLLYLGRTEYTITMYDTKTRELRWNATYFDYAASLPEDDVDYKMSHFVSNGDGLVVTVDSESGDVLWIQNYASPVVAFYVWQREGLRKVMHINVAVETLRYLTFMSGEVGRITKWKYPFPKETEAKSKLTPTLYVGKYSTSLYASPSMVHEGVAVVPRGSTLPLLEGPQTDGVTIGDKGECVITPSTDVKFDPGLKSKNKLNYLRNYWLLIGHHETPLSASTKMLERFPNNLPKHRENVIPADSEKKSFEEVINLVDQTSENAPTTVSRDVEEKPAHAPARPEAPVDSMLKDMATIILSTFLLIGWVAFIITYPLSMHQQQQLQHQQFQKELEKIQLLQQQQQQLPFHPPGDTAQDGELLDTSGPYSESSGTSSPSTSPRASNHSLCSGSSASKAGSSPSLEQDDGDEETSVVIVGKISFCPKDVLGHGAEGTIVYRGMFDNRDVAVKRILPECFSFADREVQLLRESDEHPNVIRYFCTEKDRQFQYIAIELCAATLQEYVEQKDFAHLGLEPITLLQQTTSGLAHLHSLNIVHRDLKPHNILISMPNAHGKIKAMISDFGLCKKLAVGRHSFSRRSGVPGTEGWIAPEMLSEDCKENPTYTVDIFSAGCVFYYVISEGSHPFGKSLQRQANILLGACSLDCLHPEKHEDVIARELIEKMIAMDPQKRPSAKHVLKHPFFWSLEKQLQFFQDVSDRIEKESLDGPIVKQLERGGRAVVKMDWRENITVPLQTDLRKFRTYKGGSVRDLLRAMRNKKHHYRELPAEVRETLGSLPDDFVCYFTSRFPHLLAHTYRAMELCSHERLFQPYYFHEPPEPQPPVTPDAL.

The N-terminal stretch at 1–18 (MPARRLLLLLTLLLPGLG) is a signal peptide. The Lumenal segment spans residues 19–443 (IFGSTSTVTL…EAPVDSMLKD (425 aa)). Asparagine 176 is a glycosylation site (N-linked (GlcNAc...) asparagine). A compositionally biased stretch (polar residues) spans 410 to 419 (TSENAPTTVS). The segment at 410 to 434 (TSENAPTTVSRDVEEKPAHAPARPE) is disordered. Residues 444 to 464 (MATIILSTFLLIGWVAFIITY) traverse the membrane as a helical segment. At 465 to 977 (PLSMHQQQQL…PQPPVTPDAL (513 aa)) the chain is on the cytoplasmic side. The segment at 491 to 559 (QQQQQLPFHP…PSLEQDDGDE (69 aa)) is disordered. Over residues 513–552 (TSGPYSESSGTSSPSTSPRASNHSLCSGSSASKAGSSPSL) the composition is skewed to low complexity. The Protein kinase domain maps to 571–832 (FCPKDVLGHG…AKHVLKHPFF (262 aa)). Residues 577–585 (LGHGAEGTI), lysine 599, and 643–645 (ELC) contribute to the ATP site. The active-site Proton acceptor is aspartate 688. Residues 690–693 (KPHN) and aspartate 711 contribute to the ATP site. 2 positions are modified to phosphoserine: serine 724 and serine 729. Residues 835–963 (LEKQLQFFQD…ERLFQPYYFH (129 aa)) form the KEN domain. Residues 906–907 (NK) form an interacts with hydroxy-aryl-aldehyde inhibitors region. Threonine 973 is subject to Phosphothreonine.

This sequence belongs to the protein kinase superfamily. Ser/Thr protein kinase family. Monomer. Homodimer; disulfide-linked; homodimerization takes place in response to endoplasmic reticulum stress and promotes activation of the kinase and endoribonuclease activities. Dimer formation is driven by hydrophobic interactions within the N-terminal luminal domains and stabilized by disulfide bridges. Interacts (via the luminal region) with DNAJB9/ERdj4; interaction takes place in unstressed cells and promotes recruitment of HSPA5/BiP. Interacts (via the luminal region) with HSPA5/BiP; HSPA5/BiP is a negative regulator of the unfolded protein response (UPR) that prevents homodimerization of ERN1/IRE1 and subsequent activation of the protein. Interaction with HSPA5 also competitively inhibits ERN1 interaction with MANF. Interacts with PDIA6, a negative regulator of the UPR; the interaction is direct and disrupts homodimerization. Interacts with DAB2IP (via PH domain); the interaction occurs in a endoplasmic reticulum stress-induced dependent manner and is required for subsequent recruitment of TRAF2 to ERN1/IRE1. Interacts with TAOK3 and TRAF2. Interacts with RNF13. Interacts with LACC1. Interacts (when unphosphorylated) with DDRGK1; interaction is dependent on UFM1 and takes place in response to endoplasmic reticulum stress, regulating ERN1/IRE1-alpha stability. Interacts (via N-terminus) with P4HB/PDIA1; the interaction is enhanced by phosphorylation of P4HB by FAM20C in response to endoplasmic reticulum stress and results in attenuation of ERN1 activity. Interacts with TMBIM6; this interaction inhibits ERN1 activity. Interacts (via luminal domain) with MANF (via C-terminus); the interaction is decreased in the presence of increasing concentrations of Ca(2+). Requires Mg(2+) as cofactor. Autophosphorylated following homodimerization. Autophosphorylation promotes activation of the endoribonuclease domain. In response to ER stress, phosphorylated at Ser-724, Ser-729 and possibly Ser-726; phosphorylation promotes oligomerization and endoribonuclease activity. Dephosphorylated at Ser-724, Ser-729 and possibly Ser-726 by RPAP2 to abort failed ER-stress adaptation and trigger apoptosis. Phosphorylated at Ser-724; in response to the ER stressor tunicamycin. In terms of processing, ADP-ribosylated by PARP16 upon ER stress, which increases both kinase and endonuclease activities. In terms of tissue distribution, ubiquitously expressed. High levels observed in pancreatic tissue.

Its subcellular location is the endoplasmic reticulum membrane. It catalyses the reaction L-seryl-[protein] + ATP = O-phospho-L-seryl-[protein] + ADP + H(+). It carries out the reaction L-threonyl-[protein] + ATP = O-phospho-L-threonyl-[protein] + ADP + H(+). The kinase domain is activated by trans-autophosphorylation following homodimerization. Kinase activity is required for activation of the endoribonuclease domain. Endoribonuclease activity is specifically inhibited by hydroxy-aryl-aldehydes (HAA). In terms of biological role, serine/threonine-protein kinase and endoribonuclease that acts as a key sensor for the endoplasmic reticulum unfolded protein response (UPR). In unstressed cells, the endoplasmic reticulum luminal domain is maintained in its inactive monomeric state by binding to the endoplasmic reticulum chaperone HSPA5/BiP. Accumulation of misfolded proteins in the endoplasmic reticulum causes release of HSPA5/BiP, allowing the luminal domain to homodimerize, promoting autophosphorylation of the kinase domain and subsequent activation of the endoribonuclease activity. The endoribonuclease activity is specific for XBP1 mRNA and excises 26 nucleotides from XBP1 mRNA. The resulting spliced transcript of XBP1 encodes a transcriptional activator protein that up-regulates expression of UPR target genes. Acts as an upstream signal for ER stress-induced GORASP2-mediated unconventional (ER/Golgi-independent) trafficking of CFTR to cell membrane by modulating the expression and localization of SEC16A. This Homo sapiens (Human) protein is Serine/threonine-protein kinase/endoribonuclease IRE1.